The primary structure comprises 255 residues: Trypsin alpha-4 (255 aa).

The first 16 residues, M1–G16, serve as a signal peptide directing secretion. A propeptide spans A17–R30 (activation peptide). In terms of domain architecture, Peptidase S1 spans I31–S253. C56 and C72 form a disulfide bridge. Residues H71 and D116 each act as charge relay system in the active site. 2 cysteine pairs are disulfide-bonded: C179/C196 and C205/C229. S209 serves as the catalytic Charge relay system.

Belongs to the peptidase S1 family.

It is found in the secreted. It localises to the extracellular space. The catalysed reaction is Preferential cleavage: Arg-|-Xaa, Lys-|-Xaa.. The polypeptide is Trypsin alpha-4 (Lucilia cuprina (Green bottle fly)).